Reading from the N-terminus, the 252-residue chain is Uridylate kinase (252 aa).

20–23 (KLSG) lines the ATP pocket. The segment at 28–33 (GGGGLG) is involved in allosteric activation by GTP. Gly-62 serves as a coordination point for UMP. Residues Gly-63 and Arg-67 each contribute to the ATP site. Residues Asp-82 and 143 to 150 (MGMPYFST) each bind UMP. Residues Asn-171, Tyr-177, and Asp-180 each contribute to the ATP site.

The protein belongs to the UMP kinase family. In terms of assembly, homohexamer.

The protein resides in the cytoplasm. It carries out the reaction UMP + ATP = UDP + ADP. The protein operates within pyrimidine metabolism; CTP biosynthesis via de novo pathway; UDP from UMP (UMPK route): step 1/1. Allosterically activated by GTP. Inhibited by UTP. Catalyzes the reversible phosphorylation of UMP to UDP. This Streptomyces avermitilis (strain ATCC 31267 / DSM 46492 / JCM 5070 / NBRC 14893 / NCIMB 12804 / NRRL 8165 / MA-4680) protein is Uridylate kinase.